An 83-amino-acid chain; its full sequence is Evasin P1090 (83 aa).

Positions 1–24 (MEVKIFAFLQIAVLIAFSLHLASA) are cleaved as a signal peptide. 3 disulfide bridges follow: cysteine 44-cysteine 63, cysteine 48-cysteine 65, and cysteine 59-cysteine 76. Asparagine 47 is a glycosylation site (N-linked (GlcNAc...) asparagine). Asparagine 70 carries N-linked (GlcNAc...) asparagine glycosylation.

The protein localises to the secreted. In terms of biological role, salivary chemokine-binding protein which binds to host chemokines CXCL1, CXCL2, CXCL3, CXCL5, CXCL6, CXCL10, CXCL11 and CXCL13. The chain is Evasin P1090 from Ixodes ricinus (Common tick).